We begin with the raw amino-acid sequence, 434 residues long: Serine/threonine-protein kinase Sgk1-A (434 aa).

Positions 66–94 (PQEPELLNENSSPPPSPSQQINLGPSSNP) are disordered. Positions 84-94 (QQINLGPSSNP) are enriched in polar residues. Positions 101–358 (FQFLKIIGKG…FMEIKNHIFF (258 aa)) constitute a Protein kinase domain. ATP-binding positions include 107–115 (IGKGSFGKV) and K130. D225 functions as the Proton acceptor in the catalytic mechanism. The region spanning 359–434 (SPINWDDLIN…SYAPPMESYL (76 aa)) is the AGC-kinase C-terminal domain.

It belongs to the protein kinase superfamily. AGC Ser/Thr protein kinase family.

Its subcellular location is the cytoplasm. It localises to the nucleus. The protein resides in the endoplasmic reticulum. It carries out the reaction L-seryl-[protein] + ATP = O-phospho-L-seryl-[protein] + ADP + H(+). The catalysed reaction is L-threonyl-[protein] + ATP = O-phospho-L-threonyl-[protein] + ADP + H(+). Functionally, protein kinase that may play an important role in cellular stress response. Plays an important role in activating certain potassium, sodium, and chloride channels, suggesting an involvement in the regulation of processes such as cell survival, neuronal excitability, and renal sodium excretion. This is Serine/threonine-protein kinase Sgk1-A (sgk1-a) from Xenopus laevis (African clawed frog).